A 215-amino-acid chain; its full sequence is Uridine kinase (215 aa).

ATP is bound at residue 16-23 (GASASGKS).

It belongs to the uridine kinase family.

It localises to the cytoplasm. The catalysed reaction is uridine + ATP = UMP + ADP + H(+). The enzyme catalyses cytidine + ATP = CMP + ADP + H(+). The protein operates within pyrimidine metabolism; CTP biosynthesis via salvage pathway; CTP from cytidine: step 1/3. It functions in the pathway pyrimidine metabolism; UMP biosynthesis via salvage pathway; UMP from uridine: step 1/1. The sequence is that of Uridine kinase from Aliivibrio salmonicida (strain LFI1238) (Vibrio salmonicida (strain LFI1238)).